Here is a 295-residue protein sequence, read N- to C-terminus: Voltage-gated potassium channel (295 aa).

At 1 to 38 (MSVERWVFPGCSVMARFRRGLSDLGGRVRNIGDVMEHP) the chain is on the cytoplasmic side. The chain crosses the membrane as a helical span at residues 39-63 (LVELGVSYAALLSVIVVVVEYTMQL). Residues 64–67 (SGEY) are Extracellular-facing. Residues 68–92 (LVRLYLVDLILVIILWADYAYRAYK) traverse the membrane as a helical segment. Over 93 to 96 (SGDP) the chain is Cytoplasmic. Residues 97-105 (AGYVKKTLY) constitute an intramembrane region (helical). Over 106 to 108 (EIP) the chain is Extracellular. The helical; Voltage-sensor transmembrane segment at 109–125 (ALVPAGLLALIEGHLAG) threads the bilayer. Topologically, residues 126–128 (LGL) are cytoplasmic. Residues 129 to 145 (FRLVRLLRFLRILLIIS) traverse the membrane as a helical; Voltage-sensor segment. Residues 146-159 (RGSKFLSAIADAAD) lie on the Cytoplasmic side of the membrane. The chain crosses the membrane as a helical span at residues 160 to 184 (KIRFYHLFGAVMLTVLYGAFAIYIV). Residues 185–195 (EYPDPNSSIKS) lie on the Extracellular side of the membrane. The pore-forming intramembrane region spans 196 to 208 (VFDALWWAVVTAT). A Selectivity filter motif is present at residues 209–214 (TVGYGD). Residues 209-221 (TVGYGDVVPATPI) are Extracellular-facing. The chain crosses the membrane as a helical span at residues 222–253 (GKVIGIAVMLTGISALTLLIGTVSNMFQKILV). Over 254-295 (GEPEPSCSPAKLAEMVSSMSEEEFEEFVRTLKNLRRLENSMK) the chain is Cytoplasmic.

The protein belongs to the potassium channel family.

Its subcellular location is the cell membrane. Its function is as follows. Mediates a strong voltage-dependent potassium ion permeability of excitable membranes. Assuming opened or closed conformations in response to the voltage difference across the membrane, the protein forms a potassium-selective channel through which potassium ions may pass in accordance with their electrochemical gradient. The sequence is that of Voltage-gated potassium channel from Aeropyrum pernix (strain ATCC 700893 / DSM 11879 / JCM 9820 / NBRC 100138 / K1).